We begin with the raw amino-acid sequence, 148 residues long: Lysozyme C-1 (148 aa).

The N-terminal stretch at 1–18 is a signal peptide; sequence MKALLTLGLLLLSVTAQA. The C-type lysozyme domain maps to 19 to 148; sequence KVYNRCELAR…LSQYIRNCGV (130 aa). 4 disulfide bridges follow: Cys-24–Cys-146, Cys-48–Cys-134, Cys-83–Cys-99, and Cys-95–Cys-113. Catalysis depends on residues Glu-53 and Asp-71.

It belongs to the glycosyl hydrolase 22 family. In terms of assembly, monomer. In terms of tissue distribution, expressed strongly only in small intestine.

It localises to the secreted. The catalysed reaction is Hydrolysis of (1-&gt;4)-beta-linkages between N-acetylmuramic acid and N-acetyl-D-glucosamine residues in a peptidoglycan and between N-acetyl-D-glucosamine residues in chitodextrins.. Functionally, lysozymes have primarily a bacteriolytic function; those in tissues and body fluids are associated with the monocyte-macrophage system and enhance the activity of immunoagents. Lyz1 is active against a range of Gram-positive and Gram-negative bacteria. Less effective than Lyz2 in killing Gram-negative bacteria. Lyz1 and Lyz2 are equally effective in killing Gram-positive bacteria. This chain is Lysozyme C-1 (Lyz1), found in Mus musculus (Mouse).